Reading from the N-terminus, the 442-residue chain is GTPase Der (442 aa).

EngA-type G domains lie at 2-168 (ATVL…EEAG) and 182-356 (LKVA…EKID). Residues 8–15 (GRPNVGKS), 55–59 (DTCGL), 118–121 (NKVE), 188–195 (GKPNAGKS), 235–239 (DTAGM), and 301–304 (NKSD) each bind GTP. One can recognise a KH-like domain in the interval 357 to 442 (LRIPTGLLNN…PIFIKLRRKK (86 aa)).

The protein belongs to the TRAFAC class TrmE-Era-EngA-EngB-Septin-like GTPase superfamily. EngA (Der) GTPase family. As to quaternary structure, associates with the 50S ribosomal subunit.

Its function is as follows. GTPase that plays an essential role in the late steps of ribosome biogenesis. This chain is GTPase Der, found in Kosmotoga olearia (strain ATCC BAA-1733 / DSM 21960 / TBF 19.5.1).